Consider the following 293-residue polypeptide: 4-hydroxybenzoate octaprenyltransferase (293 aa).

8 helical membrane-spanning segments follow: residues 26–48 (PIGT…GGMP), 98–118 (TEAK…DLLL), 122–142 (TFLL…MKRF), 145–165 (LPQV…YGAV), 167–187 (ESLP…TVAY), 218–238 (IIAL…WISQ), 241–261 (WGYF…CWLT), and 272–292 (AFLN…VGIY).

Belongs to the UbiA prenyltransferase family. It depends on Mg(2+) as a cofactor.

It is found in the cell inner membrane. It carries out the reaction all-trans-octaprenyl diphosphate + 4-hydroxybenzoate = 4-hydroxy-3-(all-trans-octaprenyl)benzoate + diphosphate. The protein operates within cofactor biosynthesis; ubiquinone biosynthesis. Catalyzes the prenylation of para-hydroxybenzoate (PHB) with an all-trans polyprenyl group. Mediates the second step in the final reaction sequence of ubiquinone-8 (UQ-8) biosynthesis, which is the condensation of the polyisoprenoid side chain with PHB, generating the first membrane-bound Q intermediate 3-octaprenyl-4-hydroxybenzoate. This is 4-hydroxybenzoate octaprenyltransferase from Actinobacillus pleuropneumoniae serotype 3 (strain JL03).